A 72-amino-acid polypeptide reads, in one-letter code: Sperm protein associated with the nucleus on the X chromosome N1 (72 aa).

A disordered region spans residues 1 to 40; that stretch reads MEKPTSSTNGEKRKSPCDSNSKNDEMQETPNRDLVLEPSL. Residues 10–35 show a composition bias toward basic and acidic residues; it reads GEKRKSPCDSNSKNDEMQETPNRDLV.

The protein belongs to the SPAN-X family.

This chain is Sperm protein associated with the nucleus on the X chromosome N1 (SPANXN1), found in Pan troglodytes (Chimpanzee).